Consider the following 1322-residue polypeptide: Centrosome-associated protein Alms1a (1322 aa).

9 disordered regions span residues 1–26 (MRAKRGAVGKVMMSGSRHNKLAESSR), 53–135 (TASS…SEVT), 165–193 (SQSAEDIRTPTKSPQMQNKKTQTPESVLK), 252–442 (EEPS…NSVY), 464–614 (KHNQ…GSRP), 657–752 (ESST…ASTD), 814–844 (SKSQKKANTESATAAQIPSSMRCMGDQKERP), 856–911 (AEAE…LNQR), and 1083–1109 (ASATGGAGGSAITRSTTTTTNSSSSMM). The segment covering 53-62 (TASSGASGST) has biased composition (low complexity). The segment covering 78–111 (MEHESRPESGHRRRTKSSDHRSPDERGEAKEQLR) has biased composition (basic and acidic residues). Residues 165 to 189 (SQSAEDIRTPTKSPQMQNKKTQTPE) are compositionally biased toward polar residues. Residues 279 to 292 (SLNSGMESSLSSNK) are compositionally biased toward low complexity. The span at 309–318 (EVSSCQTDCR) shows a compositional bias: polar residues. The span at 319-330 (SSSQKESTQGSS) shows a compositional bias: low complexity. Over residues 338–350 (NFTTEGTQCSYNR) the composition is skewed to polar residues. The segment covering 354 to 364 (EIDSIMEEEES) has biased composition (acidic residues). Composition is skewed to basic and acidic residues over residues 365–375 (IDRRKKDDLRI) and 394–408 (SRRESLSSYRRDDSR). Residues 409-430 (LNSPNSSRLGSEVSSRVESSRS) show a composition bias toward low complexity. 3 stretches are compositionally biased toward basic and acidic residues: residues 464 to 487 (KHNQRRQQEMEVEPKKQLEKEQHQ), 495 to 512 (PKGRELKDKNHHSGREQQ), and 519 to 538 (RDQRKAEQRHEKDHQLEREQ). 2 stretches are compositionally biased toward low complexity: residues 594–605 (STGVTASTSTTS) and 657–669 (ESSTSSRSLSSSS). Residues 678-696 (GSLQQVAATNTNQSNARSS) show a composition bias toward polar residues. Residues 714 to 735 (AIGSSSPLPESVSYSGSTSGSG) are compositionally biased toward low complexity. Polar residues-rich tracts occupy residues 737-751 (VITQKTNIPNRNAST) and 822-832 (TESATAAQIPS). Residues 893–907 (LPAPPPTQPPPPPPH) are compositionally biased toward pro residues. The span at 1092–1107 (SAITRSTTTTTNSSSS) shows a compositional bias: low complexity. The interval 1115–1322 (MSVPMGMMNT…ISLNHSMAIM (208 aa)) is interaction with Klp10A. The interval 1190–1309 (SLQDQLQLAR…FNKRLKSRVA (120 aa)) is ALMS motif.

The protein belongs to the ALMS1 family. In terms of assembly, interacts (via C-terminus) with Klp10A. Interacts with SAK. In terms of tissue distribution, expressed in all germlines, including germline stem cells and spermatogonia.

It is found in the cytoplasm. It localises to the cytoskeleton. Its subcellular location is the microtubule organizing center. The protein localises to the centrosome. The protein resides in the centriole. Functionally, in asymmetrically dividing germline stem cells (GSCs), plays a critical role in ensuring centrosome duplication, which is essential for the production of centrosomes and centrioles in all downstream germ cells. Might recruit SAK for daughter centriole duplication. This is Centrosome-associated protein Alms1a from Drosophila melanogaster (Fruit fly).